A 435-amino-acid polypeptide reads, in one-letter code: Adenylosuccinate synthetase (435 aa).

Residues 19-25 (GDEGKGK) and 49-51 (GHT) each bind GTP. The active-site Proton acceptor is Asp20. Residues Asp20 and Gly49 each contribute to the Mg(2+) site. IMP-binding positions include 20 to 23 (DEGK), 47 to 50 (NAGH), Thr139, Arg153, Asn233, Thr248, and Arg312. The Proton donor role is filled by His50. Residue 308–314 (VTTGRKR) coordinates substrate. Residues Arg314, 340–342 (KLD), and 422–424 (GVG) each bind GTP.

This sequence belongs to the adenylosuccinate synthetase family. Homodimer. Mg(2+) is required as a cofactor.

Its subcellular location is the cytoplasm. The enzyme catalyses IMP + L-aspartate + GTP = N(6)-(1,2-dicarboxyethyl)-AMP + GDP + phosphate + 2 H(+). It participates in purine metabolism; AMP biosynthesis via de novo pathway; AMP from IMP: step 1/2. Functionally, plays an important role in the de novo pathway and in the salvage pathway of purine nucleotide biosynthesis. Catalyzes the first committed step in the biosynthesis of AMP from IMP. The sequence is that of Adenylosuccinate synthetase from Brugia malayi (Filarial nematode worm).